A 232-amino-acid chain; its full sequence is Enolase-phosphatase E1 (232 aa).

Belongs to the HAD-like hydrolase superfamily. MasA/MtnC family. In terms of assembly, monomer. Mg(2+) is required as a cofactor.

The enzyme catalyses 5-methylsulfanyl-2,3-dioxopentyl phosphate + H2O = 1,2-dihydroxy-5-(methylsulfanyl)pent-1-en-3-one + phosphate. It participates in amino-acid biosynthesis; L-methionine biosynthesis via salvage pathway; L-methionine from S-methyl-5-thio-alpha-D-ribose 1-phosphate: step 3/6. Its pathway is amino-acid biosynthesis; L-methionine biosynthesis via salvage pathway; L-methionine from S-methyl-5-thio-alpha-D-ribose 1-phosphate: step 4/6. Its function is as follows. Bifunctional enzyme that catalyzes the enolization of 2,3-diketo-5-methylthiopentyl-1-phosphate (DK-MTP-1-P) into the intermediate 2-hydroxy-3-keto-5-methylthiopentenyl-1-phosphate (HK-MTPenyl-1-P), which is then dephosphorylated to form the acireductone 1,2-dihydroxy-3-keto-5-methylthiopentene (DHK-MTPene). This is Enolase-phosphatase E1 from Sorangium cellulosum (strain So ce56) (Polyangium cellulosum (strain So ce56)).